A 338-amino-acid chain; its full sequence is Glyceraldehyde-3-phosphate dehydrogenase, cytosolic (338 aa).

NAD(+) is bound by residues Arg-14–Ile-15, Asp-36, and Arg-83. D-glyceraldehyde 3-phosphate contacts are provided by residues Ser-154–Thr-156, Thr-185, Thr-214–Gly-215, and Arg-237. Cys-155 serves as the catalytic Nucleophile. An NAD(+)-binding site is contributed by Asn-319.

The protein belongs to the glyceraldehyde-3-phosphate dehydrogenase family. Homotetramer.

It is found in the cytoplasm. It carries out the reaction D-glyceraldehyde 3-phosphate + phosphate + NAD(+) = (2R)-3-phospho-glyceroyl phosphate + NADH + H(+). The protein operates within carbohydrate degradation; glycolysis; pyruvate from D-glyceraldehyde 3-phosphate: step 1/5. In terms of biological role, key enzyme in glycolysis that catalyzes the first step of the pathway by converting D-glyceraldehyde 3-phosphate (G3P) into 3-phospho-D-glyceroyl phosphate. Essential for the maintenance of cellular ATP levels and carbohydrate metabolism. The polypeptide is Glyceraldehyde-3-phosphate dehydrogenase, cytosolic (GAPC1) (Pisum sativum (Garden pea)).